The following is a 245-amino-acid chain: MTIQLEVCIDNLESLHYAQQGGASRIELCSSLALGGLTPSAGFMQLAAKHASIPVYAMIRPRQGDFLFSSDDVEIMLADIHAAKKAQLQGVVIGVLTQEGHIDRDILNSLMKEANGLGVTFHRAIDQCIDPMAALDNIMAAGCERILTSGLQANALDGVDMIAEMVTYCGDNLSIMAGAGVTATNAKQIITRTGIREIHLSGKSTRPSHMVQFANQAHMGSADIDDFSIPVTSVEKISAVINAIR.

It belongs to the CutC family.

It is found in the cytoplasm. This Photobacterium profundum (strain SS9) protein is PF03932 family protein CutC.